Reading from the N-terminus, the 349-residue chain is tRNA pseudouridine synthase D (349 aa).

A substrate-binding site is contributed by Phe27. The active-site Nucleophile is Asp80. Asn129 contacts substrate. The 149-residue stretch at 155–303 folds into the TRUD domain; sequence GVPNYFGAQR…VEASRRAMLL (149 aa). Residue Phe329 participates in substrate binding.

Belongs to the pseudouridine synthase TruD family.

It catalyses the reaction uridine(13) in tRNA = pseudouridine(13) in tRNA. Its function is as follows. Responsible for synthesis of pseudouridine from uracil-13 in transfer RNAs. The chain is tRNA pseudouridine synthase D from Salmonella newport (strain SL254).